Consider the following 101-residue polypeptide: Small ribosomal subunit protein uS14 (101 aa).

Belongs to the universal ribosomal protein uS14 family. As to quaternary structure, part of the 30S ribosomal subunit. Contacts proteins S3 and S10.

Its function is as follows. Binds 16S rRNA, required for the assembly of 30S particles and may also be responsible for determining the conformation of the 16S rRNA at the A site. The sequence is that of Small ribosomal subunit protein uS14 from Polynucleobacter necessarius subsp. necessarius (strain STIR1).